We begin with the raw amino-acid sequence, 881 residues long: Armadillo repeat-containing protein 3 (881 aa).

12 ARM repeats span residues 15–54 (DVFD…KFAL), 57–96 (EENK…ILAS), 98–138 (SDVK…NMSV), 140–179 (YTGK…NLVQ), 181–220 (FQCR…VITC), 222–262 (KEAR…NCLE), 264–304 (MDTM…KAAY), 306–345 (PENR…ALCE), 346–385 (NLSC…NLTT), 388–427 (PANA…NMAT), 429–468 (EPLR…ATAC), and 470–509 (VEAR…VCAG). Residues cysteine 507 and cysteine 518 are each lipidated (S-palmitoyl cysteine). The interval 605–659 (NNKSDTSPPPSMEDKSSDVGYGRSISSSSSLRRGSKEKANAIFGSPTEEKSEPAS) is disordered. Positions 622 to 636 (DVGYGRSISSSSSLR) are enriched in low complexity.

As to quaternary structure, homodimer. Interacts with PIK3C3, PIK3R4 and BECN1. Interacts (via ARM domains) with ATG14. Palmitoylation is important for its function in autophagy. In terms of tissue distribution, testis-specific.

In terms of biological role, essential for male fertility and sperm motility. During spermatogenesis, promotes the autophagic degradation of excessive ribosomes, providing energy resources for mitochondria and thus ensuring sperm flagellar motility. This Mus musculus (Mouse) protein is Armadillo repeat-containing protein 3 (Armc3).